Reading from the N-terminus, the 682-residue chain is ATP-dependent zinc metalloprotease FtsH (682 aa).

The Cytoplasmic portion of the chain corresponds to 1 to 7 (MKQSHKT). Residues 8–28 (ILLWALLIFLFVMIYNLISDG) form a helical membrane-spanning segment. The Periplasmic portion of the chain corresponds to 29–138 (TSGEETLDTT…YEVKAKEEST (110 aa)). A helical membrane pass occupies residues 139-159 (FWQSLLISWLPMLLLFALFFF). Topologically, residues 160–682 (FMRQLQAGGG…SGTDPEPEPA (523 aa)) are cytoplasmic. 232–239 (GPPGTGKT) contributes to the ATP binding site. A Zn(2+)-binding site is contributed by histidine 454. The active site involves glutamate 455. Zn(2+) is bound by residues histidine 458 and aspartate 531. The disordered stretch occupies residues 638–682 (LSRPAVVSKPSADAESSVDEDEREARPALFPPLGKSGTDPEPEPA).

This sequence in the central section; belongs to the AAA ATPase family. In the C-terminal section; belongs to the peptidase M41 family. Homohexamer. Zn(2+) is required as a cofactor.

It is found in the cell inner membrane. Functionally, acts as a processive, ATP-dependent zinc metallopeptidase for both cytoplasmic and membrane proteins. Plays a role in the quality control of integral membrane proteins. The sequence is that of ATP-dependent zinc metalloprotease FtsH from Haliangium ochraceum (strain DSM 14365 / JCM 11303 / SMP-2).